The primary structure comprises 355 residues: Uroporphyrinogen decarboxylase (355 aa).

Residues 27–31 (RQAGR), D78, Y155, T210, and H328 each bind substrate.

The protein belongs to the uroporphyrinogen decarboxylase family. In terms of assembly, homodimer.

Its subcellular location is the cytoplasm. It catalyses the reaction uroporphyrinogen III + 4 H(+) = coproporphyrinogen III + 4 CO2. Its pathway is porphyrin-containing compound metabolism; protoporphyrin-IX biosynthesis; coproporphyrinogen-III from 5-aminolevulinate: step 4/4. Functionally, catalyzes the decarboxylation of four acetate groups of uroporphyrinogen-III to yield coproporphyrinogen-III. The sequence is that of Uroporphyrinogen decarboxylase from Pseudomonas fluorescens (strain SBW25).